Reading from the N-terminus, the 332-residue chain is UDP-3-O-acylglucosamine N-acyltransferase (332 aa).

Catalysis depends on H231, which acts as the Proton acceptor.

This sequence belongs to the transferase hexapeptide repeat family. LpxD subfamily. Homotrimer.

It catalyses the reaction a UDP-3-O-[(3R)-3-hydroxyacyl]-alpha-D-glucosamine + a (3R)-hydroxyacyl-[ACP] = a UDP-2-N,3-O-bis[(3R)-3-hydroxyacyl]-alpha-D-glucosamine + holo-[ACP] + H(+). Its pathway is bacterial outer membrane biogenesis; LPS lipid A biosynthesis. Catalyzes the N-acylation of UDP-3-O-acylglucosamine using 3-hydroxyacyl-ACP as the acyl donor. Is involved in the biosynthesis of lipid A, a phosphorylated glycolipid that anchors the lipopolysaccharide to the outer membrane of the cell. The polypeptide is UDP-3-O-acylglucosamine N-acyltransferase (Ruthia magnifica subsp. Calyptogena magnifica).